A 395-amino-acid polypeptide reads, in one-letter code: RNA pseudouridine synthase 7 (395 aa).

The segment at 1–21 (MKRKQQEDDNDDGVEKAVSPV) is disordered. One can recognise an S4 RNA-binding domain in the interval 74-136 (KTIVDLFADE…HEPPVMIDDV (63 aa)). Asp-187 is an active-site residue. The span at 244–255 (EGRSTAEDANSS) shows a compositional bias: polar residues. The interval 244 to 263 (EGRSTAEDANSSGDDKKVKG) is disordered.

Belongs to the pseudouridine synthase RluA family.

It carries out the reaction a uridine in RNA = a pseudouridine in RNA. The polypeptide is RNA pseudouridine synthase 7 (Arabidopsis thaliana (Mouse-ear cress)).